A 732-amino-acid chain; its full sequence is MDQKTIKAHKISDSEYKKILEILGREPNLLELGIFSSMWSEHCSYKSSKKYLNGFPTKAPWVIQGPGENAGVIDIGDGMAAVFKMESHNHPSYIEPFQGAATGVGGILRDIFTMGARVEVNMNSLRFGDVIGDSKVNRYQRYLVKGVVGGIAHYGNCMGIPTIGGETTFDSSFNGNILVNAFALGIVKSDEIFYGKAEGAGNPVIYVGSKTGRDGLGGAVMASDSFNEENKSLRPTVQVGDPFAEKLLMEACLELFKKGYIIGIQDMGAAGLTSSSFEMAGRSGSGMIMHLDKVPMRENEMTPYELMLSESQERMLICAKKGCEEKVKEIFAKWDLDAEVIGEVTNSGNMELFWYGKKVADVPIAPLSEAAPILDRPVKKPAYLDKIASGNLCGCGVSKISNKEAFDKIFAEPEILNKNFIYDQYDANIGTNTIKKPGFLGAAAIRVKENGVNLCMAMDCNSRMNYINPRIGAALAVAASGRKVAMSGAVPLAITDCLNYGNPQNEEVMWQFAQGCEGIKAACKALNTPVVSGNVSLYNETDGVSIQPTPAIVMVGTAKNALLPSHFTKNGVNVYLIGDTKGVFAGSLYMKVVENRITGTLPEIDFIKERALWDLVIEANKCEILEFANSVGVGGVAITLAKMACIEQIGGNFDMIVDDDRDIFDESFSRAIVGVKNETEFLKLAKKSGLKFTKLGASGGETFKINEISVKIKQLAEIYFNKFSQIIKGETF.

The active site involves His-42. Positions 45 and 84 each coordinate ATP. Mg(2+) is bound at residue Glu-86. Substrate is bound by residues 87 to 90 (SHNH) and Arg-109. Residue His-88 is the Proton acceptor of the active site. Asp-110 provides a ligand contact to Mg(2+). Gln-238 provides a ligand contact to substrate. Asp-266 contributes to the Mg(2+) binding site. Residue 310–312 (ESQ) coordinates substrate. Residues Asp-496 and Gly-533 each contribute to the ATP site. Asn-534 serves as a coordination point for Mg(2+). Residue Ser-536 coordinates substrate.

Belongs to the FGAMS family. Monomer. Part of the FGAM synthase complex composed of 1 PurL, 1 PurQ and 2 PurS subunits.

It localises to the cytoplasm. The catalysed reaction is N(2)-formyl-N(1)-(5-phospho-beta-D-ribosyl)glycinamide + L-glutamine + ATP + H2O = 2-formamido-N(1)-(5-O-phospho-beta-D-ribosyl)acetamidine + L-glutamate + ADP + phosphate + H(+). It functions in the pathway purine metabolism; IMP biosynthesis via de novo pathway; 5-amino-1-(5-phospho-D-ribosyl)imidazole from N(2)-formyl-N(1)-(5-phospho-D-ribosyl)glycinamide: step 1/2. Functionally, part of the phosphoribosylformylglycinamidine synthase complex involved in the purines biosynthetic pathway. Catalyzes the ATP-dependent conversion of formylglycinamide ribonucleotide (FGAR) and glutamine to yield formylglycinamidine ribonucleotide (FGAM) and glutamate. The FGAM synthase complex is composed of three subunits. PurQ produces an ammonia molecule by converting glutamine to glutamate. PurL transfers the ammonia molecule to FGAR to form FGAM in an ATP-dependent manner. PurS interacts with PurQ and PurL and is thought to assist in the transfer of the ammonia molecule from PurQ to PurL. This is Phosphoribosylformylglycinamidine synthase subunit PurL from Campylobacter hominis (strain ATCC BAA-381 / DSM 21671 / CCUG 45161 / LMG 19568 / NCTC 13146 / CH001A).